The following is a 253-amino-acid chain: Triosephosphate isomerase (253 aa).

Residue 9-11 (NWK) coordinates substrate. The Electrophile role is filled by His98. Glu170 (proton acceptor) is an active-site residue. Residues Gly176, Ser216, and 237 to 238 (GG) contribute to the substrate site.

The protein belongs to the triosephosphate isomerase family. Homodimer.

The protein resides in the cytoplasm. It catalyses the reaction D-glyceraldehyde 3-phosphate = dihydroxyacetone phosphate. Its pathway is carbohydrate biosynthesis; gluconeogenesis. It functions in the pathway carbohydrate degradation; glycolysis; D-glyceraldehyde 3-phosphate from glycerone phosphate: step 1/1. Its function is as follows. Involved in the gluconeogenesis. Catalyzes stereospecifically the conversion of dihydroxyacetone phosphate (DHAP) to D-glyceraldehyde-3-phosphate (G3P). In Amoebophilus asiaticus (strain 5a2), this protein is Triosephosphate isomerase.